The primary structure comprises 88 residues: MANTTSAKKATRKIARRTIVNKSRRTQMRGAVRTVEEAIAKGDRDAAVKAMTRCEPELMQAAQRNIIHRNAASRKVSRLTQKIAKLAK.

Belongs to the bacterial ribosomal protein bS20 family.

Functionally, binds directly to 16S ribosomal RNA. This Rhodopseudomonas palustris (strain BisA53) protein is Small ribosomal subunit protein bS20.